Consider the following 316-residue polypeptide: Beta-lactamase 3 (316 aa).

A signal peptide spans 1 to 29 (MFVLNKFFTNSHYKKIVPVVLLSCATLIG). The N-palmitoyl cysteine moiety is linked to residue Cys-30. A lipid anchor (S-diacylglycerol cysteine) is attached at Cys-30. Residues 34–53 (NTQSESNKQTNQTNQVKQEN) form a disordered region. Residues 40 to 50 (NKQTNQTNQVK) show a composition bias toward low complexity. Ser-95 acts as the Acyl-ester intermediate in catalysis. The active-site Proton acceptor is the Glu-191. 257–259 (KTG) contacts substrate.

This sequence belongs to the class-A beta-lactamase family.

Its subcellular location is the cell membrane. It catalyses the reaction a beta-lactam + H2O = a substituted beta-amino acid. The polypeptide is Beta-lactamase 3 (blaZ) (Bacillus cereus).